Here is a 269-residue protein sequence, read N- to C-terminus: Putative pyruvate, phosphate dikinase regulatory protein (269 aa).

153-160 contributes to the ADP binding site; it reads GVSRTSKT.

The protein belongs to the pyruvate, phosphate/water dikinase regulatory protein family. PDRP subfamily.

It catalyses the reaction N(tele)-phospho-L-histidyl/L-threonyl-[pyruvate, phosphate dikinase] + ADP = N(tele)-phospho-L-histidyl/O-phospho-L-threonyl-[pyruvate, phosphate dikinase] + AMP + H(+). It carries out the reaction N(tele)-phospho-L-histidyl/O-phospho-L-threonyl-[pyruvate, phosphate dikinase] + phosphate + H(+) = N(tele)-phospho-L-histidyl/L-threonyl-[pyruvate, phosphate dikinase] + diphosphate. Functionally, bifunctional serine/threonine kinase and phosphorylase involved in the regulation of the pyruvate, phosphate dikinase (PPDK) by catalyzing its phosphorylation/dephosphorylation. The polypeptide is Putative pyruvate, phosphate dikinase regulatory protein (Pediococcus pentosaceus (strain ATCC 25745 / CCUG 21536 / LMG 10740 / 183-1w)).